Here is a 197-residue protein sequence, read N- to C-terminus: Probable molybdenum cofactor guanylyltransferase (197 aa).

GTP is bound by residues leucine 12 to glycine 14, lysine 24, aspartate 71, and aspartate 103. Aspartate 103 provides a ligand contact to Mg(2+).

This sequence belongs to the MobA family. The cofactor is Mg(2+).

It localises to the cytoplasm. The enzyme catalyses Mo-molybdopterin + GTP + H(+) = Mo-molybdopterin guanine dinucleotide + diphosphate. Transfers a GMP moiety from GTP to Mo-molybdopterin (Mo-MPT) cofactor (Moco or molybdenum cofactor) to form Mo-molybdopterin guanine dinucleotide (Mo-MGD) cofactor. This Mycolicibacterium paratuberculosis (strain ATCC BAA-968 / K-10) (Mycobacterium paratuberculosis) protein is Probable molybdenum cofactor guanylyltransferase.